A 210-amino-acid polypeptide reads, in one-letter code: Frataxin, mitochondrial (210 aa).

A mitochondrion-targeting transit peptide spans M1–G41.

It belongs to the frataxin family. Component of the mitochondrial core iron-sulfur cluster (ISC) complex composed of NFS1, LYRM4, NDUFAB1, ISCU, FXN, and FDX2; this complex is a heterohexamer containing two copies of each monomer. Homodimer. Monomer (probable predominant form). Oligomer. Monomers and polymeric aggregates of &gt;1 MDa have been isolated from mitochondria. A small fraction of heterologous overexpressed recombinant frataxin forms high-molecular weight aggregates that incorporate iron. Interacts with LYRM4. Interacts (via ferrous form) with ISCU; the interaction is possible when both are bound to the dimeric form of the cysteine desulfurase complex (NFS1:LYRM4) and the interaction enhances FXN interaction to the dimeric form of the cysteine desulfurase complex (NFS1:LYRM4). Interacts with FECH; one iron-bound FXN monomer seems to interact with a FECH homodimer. Interacts with SDHA and SDHB. Interacts with ACO2; the interaction is dependent on citrate. Interacts with HSPA9. As to quaternary structure, interacts with ACO1. Interacts with ISCU (cytoplasmic form). In terms of processing, processed in two steps by mitochondrial processing peptidase (MPP). MPP first cleaves the precursor to intermediate form and subsequently converts the intermediate to yield frataxin mature form (frataxin(81-210)) which is the predominant form. The additional forms, frataxin(56-210) and frataxin(78-210), seem to be produced when the normal maturation process is impaired; their physiological relevance is unsure.

The protein resides in the mitochondrion. It is found in the cytoplasm. It localises to the cytosol. It carries out the reaction 4 Fe(2+) + O2 + 4 H(+) = 4 Fe(3+) + 2 H2O. In terms of biological role, functions as an activator of persulfide transfer to the scaffoding protein ISCU as component of the core iron-sulfur cluster (ISC) assembly complex and participates to the [2Fe-2S] cluster assembly. Accelerates sulfur transfer from NFS1 persulfide intermediate to ISCU and to small thiols such as L-cysteine and glutathione leading to persulfuration of these thiols and ultimately sulfide release. Binds ferrous ion and is released from FXN upon the addition of both L-cysteine and reduced FDX2 during [2Fe-2S] cluster assembly. The core iron-sulfur cluster (ISC) assembly complex is involved in the de novo synthesis of a [2Fe-2S] cluster, the first step of the mitochondrial iron-sulfur protein biogenesis. This process is initiated by the cysteine desulfurase complex (NFS1:LYRM4:NDUFAB1) that produces persulfide which is delivered on the scaffold protein ISCU in a FXN-dependent manner. Then this complex is stabilized by FDX2 which provides reducing equivalents to accomplish the [2Fe-2S] cluster assembly. Finally, the [2Fe-2S] cluster is transferred from ISCU to chaperone proteins, including HSCB, HSPA9 and GLRX5. May play a role in the protection against iron-catalyzed oxidative stress through its ability to catalyze the oxidation of Fe(2+) to Fe(3+); the oligomeric form but not the monomeric form has in vitro ferroxidase activity. May be able to store large amounts of iron in the form of a ferrihydrite mineral by oligomerization; however, the physiological relevance is unsure as reports are conflicting and the function has only been shown using heterologous overexpression systems. May function as an iron chaperone protein that protects the aconitase [4Fe-4S]2+ cluster from disassembly and promotes enzyme reactivation. May play a role as a high affinity iron binding partner for FECH that is capable of both delivering iron to ferrochelatase and mediating the terminal step in mitochondrial heme biosynthesis. Functionally, modulates the RNA-binding activity of ACO1. May be involved in the cytoplasmic iron-sulfur protein biogenesis. May contribute to oxidative stress resistance and overall cell survival. This Macaca fascicularis (Crab-eating macaque) protein is Frataxin, mitochondrial.